The chain runs to 123 residues: MKTKLGFNRLSRKSSHRRALLKNMVISFLKHEKISSTKAKLFEVKRFAERLITRAKVDTVHNRRELSKFIHDKYILNKLFTKISPVFRQRSGGYTRMIKLGKRYGDAAEMAILELVEKPLKVE.

This sequence belongs to the bacterial ribosomal protein bL17 family. As to quaternary structure, part of the 50S ribosomal subunit. Contacts protein L32.

The sequence is that of Large ribosomal subunit protein bL17 from Borrelia garinii subsp. bavariensis (strain ATCC BAA-2496 / DSM 23469 / PBi) (Borreliella bavariensis).